A 557-amino-acid polypeptide reads, in one-letter code: Pectinesterase/pectinesterase inhibitor 18 (557 aa).

Residues 1 to 34 form the signal peptide; that stretch reads MSNSNQPLLSKPKSLKHKNLCLVLSFVAILGSVA. Residues 47 to 203 are pectinesterase inhibitor 18; sequence NNDDSLLTTS…VSRARVALAI (157 aa). The segment at 246–543 is pectinesterase 18; sequence NVVVAKDGTG…FTVAKLIQGG (298 aa). Residues Thr-321 and Gln-351 each coordinate substrate. The Proton donor; for pectinesterase activity role is filled by Asp-374. Asp-395 (nucleophile; for pectinesterase activity) is an active-site residue. Substrate is bound by residues Arg-463 and Trp-465.

This sequence in the N-terminal section; belongs to the PMEI family. The protein in the C-terminal section; belongs to the pectinesterase family. Expressed in siliques, flowers, floral stems, rosette leaves and roots.

The protein resides in the secreted. The protein localises to the cell wall. It catalyses the reaction [(1-&gt;4)-alpha-D-galacturonosyl methyl ester](n) + n H2O = [(1-&gt;4)-alpha-D-galacturonosyl](n) + n methanol + n H(+). It carries out the reaction Endohydrolysis of the N-glycosidic bond at one specific adenosine on the 28S rRNA.. It functions in the pathway glycan metabolism; pectin degradation; 2-dehydro-3-deoxy-D-gluconate from pectin: step 1/5. In terms of biological role, acts in the modification of cell walls via demethylesterification of cell wall pectin. Inhibits the elongation phase of protein synthesis. The polypeptide is Pectinesterase/pectinesterase inhibitor 18 (PME18) (Arabidopsis thaliana (Mouse-ear cress)).